A 556-amino-acid chain; its full sequence is Myb/SANT-like DNA-binding domain-containing protein 2 (556 aa).

Composition is skewed to polar residues over residues 1–10 (MAASCGSSQL) and 36–45 (GNPSLSDPST). A disordered region spans residues 1–82 (MAASCGSSQL…GGASPSVSFS (82 aa)). Gly residues predominate over residues 56–74 (PAAGGAGLGGGGAAGGRGG). The Myb-like domain maps to 99-169 (SWTPAETNAL…QCRERIKTLR (71 aa)). The segment at 431 to 458 (PRSPLAEPRGADPSNETPGELEVPSPQA) is disordered.

This is Myb/SANT-like DNA-binding domain-containing protein 2 (MSANTD2) from Gallus gallus (Chicken).